We begin with the raw amino-acid sequence, 359 residues long: GATA-binding factor 1-A (359 aa).

The interval 1–21 is disordered; the sequence is MDYTTLTTQDPDPNYTESGLA. 2 consecutive GATA-type zinc fingers follow at residues 178 to 202 and 232 to 256; these read CVNC…CNAC and CSNC…CNAC. Disordered stretches follow at residues 271-311 and 323-359; these read MKKE…SPYP and PMGH…VTPP. Residues 279–291 are compositionally biased toward basic residues; sequence RNRKVSSRSKKKK.

In terms of tissue distribution, expressed in the developing ventral blood island, and in both tadpole and adult erythrocytes.

The protein resides in the nucleus. Transcription factor that acts synergistically with tal1/scl and lmo2 to specify embryonic dorsal mesoderm to a hematopoietic fate. The chain is GATA-binding factor 1-A (gata1-a) from Xenopus laevis (African clawed frog).